The following is an 84-amino-acid chain: LYR motif-containing protein 4B (84 aa).

It belongs to the complex I LYR family.

In Salmo salar (Atlantic salmon), this protein is LYR motif-containing protein 4B (lyrm4b).